Here is a 215-residue protein sequence, read N- to C-terminus: Probable GTP-binding protein EngB (215 aa).

The 175-residue stretch at 26–200 folds into the EngB-type G domain; sequence EGIEVAFAGR…RAKLDEWFAP (175 aa). GTP is bound by residues 34-41, 61-65, 79-82, 146-149, and 179-181; these read GRSNAGKS, GRTQL, DLPG, TKAD, and FSS. Mg(2+) is bound by residues Ser-41 and Thr-63.

The protein belongs to the TRAFAC class TrmE-Era-EngA-EngB-Septin-like GTPase superfamily. EngB GTPase family. Requires Mg(2+) as cofactor.

In terms of biological role, necessary for normal cell division and for the maintenance of normal septation. This is Probable GTP-binding protein EngB from Aliivibrio fischeri (strain MJ11) (Vibrio fischeri).